A 157-amino-acid chain; its full sequence is 2-C-methyl-D-erythritol 2,4-cyclodiphosphate synthase (157 aa).

A divalent metal cation-binding residues include Asp-8 and His-10. Residues 8–10 (DVH) and 34–35 (HS) each bind 4-CDP-2-C-methyl-D-erythritol 2-phosphate. An a divalent metal cation-binding site is contributed by His-42. 4-CDP-2-C-methyl-D-erythritol 2-phosphate is bound by residues 56–58 (DIG), 61–65 (FPDTD), 100–106 (AQAPKMA), 132–135 (TTTE), Phe-139, and Arg-142.

It belongs to the IspF family. As to quaternary structure, homotrimer. Requires a divalent metal cation as cofactor.

The enzyme catalyses 4-CDP-2-C-methyl-D-erythritol 2-phosphate = 2-C-methyl-D-erythritol 2,4-cyclic diphosphate + CMP. It functions in the pathway isoprenoid biosynthesis; isopentenyl diphosphate biosynthesis via DXP pathway; isopentenyl diphosphate from 1-deoxy-D-xylulose 5-phosphate: step 4/6. In terms of biological role, involved in the biosynthesis of isopentenyl diphosphate (IPP) and dimethylallyl diphosphate (DMAPP), two major building blocks of isoprenoid compounds. Catalyzes the conversion of 4-diphosphocytidyl-2-C-methyl-D-erythritol 2-phosphate (CDP-ME2P) to 2-C-methyl-D-erythritol 2,4-cyclodiphosphate (ME-CPP) with a corresponding release of cytidine 5-monophosphate (CMP). This is 2-C-methyl-D-erythritol 2,4-cyclodiphosphate synthase from Edwardsiella ictaluri (strain 93-146).